A 312-amino-acid chain; its full sequence is uncharacterized protein (312 aa).

2 stretches are compositionally biased toward basic and acidic residues: residues 1–17 (MAKYDHLELVRLPEQLE) and 28–39 (PDRDGPRHSAKL). The interval 1 to 39 (MAKYDHLELVRLPEQLERRKHGGGSPPPDRDGPRHSAKL) is disordered.

This is an uncharacterized protein from Sinorhizobium fredii (strain NBRC 101917 / NGR234).